Reading from the N-terminus, the 1264-residue chain is MPEKRLTAEPPTITEEEFEDSLATDDFLVDYFNEFLSLPTFSEAIRFNADYGVFEVANDAPQFLEKQLKKILQNQQPRNPIYDVVRKGKNEVKPVQMNAPDEDETINVNYNIMCLSREEGIKWIKKERLPAFLESDCYFEYRLAKLVSQVRWSKSGMNFTVGSNFSPWIVKKPPSLPPPATEEDNLVIMKKFYVSLGEASYTQTKDWFALAKQSQQTVSTFSLPCCVPYNKLKSPAISSVSENFIFDDGVHPRTKKDPSKTNKLISEFEEEEGEEEEVSVSLQDTPSQALLRVYLEKKQDVDESLTMHFSTCEEFLSSYIYFILRGAIQQIVGKPVGETPDYINFNNITKVSFDDCFESIHGKNFLSELVQTTKERSEEIEQTSLSSKNESAGPESRADWCISHRTYDIGNRKEFERFKKFIKGTLGERYWWLWMDIERLKVLKDPGRHQRHLEKMKKCYLVSNGDYYLSAEILSKFKLLDGSQWNEEHLRNIQSEVLKPLLLYWAPRFCVTHSASTKYASAELKFWHLRQAKPRKDIDPFPQMATLLPLRPKSCIPQIPEIQKEEFSLSQPPKSPNKSPEVKTATQKPWKRELLYPGSSKDDVIEKGSKYMSESSKVIHLTSFTDISECLKPQLDRRYAYTEEPRVKTVSDVGALGGSDMENLLQSLYVENRAGFFFTKFCEHSGNKLWKNSVYFWFDLQAYHQLFYQETLQPFKVCKQAQYLFATYVAPSATLDIGLQQEKKKEIYMKIQPPFEDLFDTAEEYILLLLLEPWTKMVKSDQIAYKKVELVEETRQLDSTYFRKLQALHKETFSKKAEDTTCEIGTGILSLSNVSKRTEYWDNVPAEYKHFKFSDLLNNKLEFEHFRQFLETHSSSMDLMCWTDIEQFRRITYRDRNQRKAKSIYIKNKYLNKKYFFGPNSPASLYQQNQVMHLSGGWGKILHEQLDAPVLVEIQKHVQNRLENVWLPLFLASEQFAARQKIKVQMKDIAEELLLQKAEKKIGVWKPVESKWISSSCKIIAFRKALLNPVTSRQFQRFVALKGDLLENGLLFWQEVQKYKDLCHSHCDESVIQKKITTIINCFINSSIPPALQIDIPVEQAQKIIEHRKELGPYVFREAQMTIFGVLFKFWPQFCEFRKNLTDENIMSVLERRQEYNKQKKKLAVLEDEKSGKDGIKQYANTSVPAIKTALLSDSFLGLQPYGRQPTWCYSKYIEALEQERILLKIQEELEKKLFAGLQPLTNFKASSSTMSLKKNMSAHSSQK.

Residues 565 to 587 (EEFSLSQPPKSPNKSPEVKTATQ) are disordered. A compositionally biased stretch (polar residues) spans 568-578 (SLSQPPKSPNK). 2 RGS domains span residues 852–980 (KFSD…AARQ) and 1021–1145 (AFRK…TDEN). Positions 1142 to 1174 (TDENIMSVLERRQEYNKQKKKLAVLEDEKSGKD) form a coiled coil.

In terms of assembly, interacts with GNA11, GNA12 and GNA13. As to expression, testis-specific. Expressed in Leydig cells and spermatogenic cells from the spermatogonia to spermatid stages (at protein level).

It localises to the cytoplasm. It is found in the nucleus. Inhibits signal transduction by increasing the GTPase activity of G protein alpha subunits thereby driving them into their inactive GDP-bound form. In Homo sapiens (Human), this protein is Regulator of G-protein signaling 22 (RGS22).